Reading from the N-terminus, the 310-residue chain is HTH-type transcriptional activator TtdR (310 aa).

One can recognise an HTH lysR-type domain in the interval 6-63; it reads PLAKDLQVLVEIVHSGSFSAAAATLGQTPAFVTKRIQILENTLATTLLNRSARGVALT. The segment at residues 23–42 is a DNA-binding region (H-T-H motif); the sequence is FSAAAATLGQTPAFVTKRIQ.

The protein belongs to the LysR transcriptional regulatory family.

Positive regulator required for L-tartrate-dependent anaerobic growth on glycerol. Induces expression of the ttdA-ttdB-ygjE operon. This Escherichia coli (strain K12) protein is HTH-type transcriptional activator TtdR (ttdR).